The sequence spans 1521 residues: Retroelement silencing factor 1 (1521 aa).

A Glycyl lysine isopeptide (Lys-Gly) (interchain with G-Cter in SUMO2) cross-link involves residue lysine 223. The tract at residues 621–640 is disordered; it reads EKQHKPIQGDPDIADSSLGK. The residue at position 910 (serine 910) is a Phosphoserine. The residue at position 996 (threonine 996) is a Phosphothreonine. 2 stretches are compositionally biased toward polar residues: residues 1093 to 1105 and 1124 to 1142; these read KNMPFSKQASQES and LSSNTDPCRSNTSSVQSVS. Disordered regions lie at residues 1093-1147, 1204-1230, and 1312-1335; these read KNMP…EKKK, ERASVQEKTVPSPESSDPKGSSSKSTR, and EASRTHSVSNNNKGKFDGKQPDKM. A Phosphoserine modification is found at serine 1142. Residues 1214–1228 are compositionally biased toward low complexity; it reads PSPESSDPKGSSSKS. A compositionally biased stretch (basic and acidic residues) spans 1325–1335; sequence GKFDGKQPDKM. A Glycyl lysine isopeptide (Lys-Gly) (interchain with G-Cter in SUMO2) cross-link involves residue lysine 1411. Disordered regions lie at residues 1425–1444 and 1457–1485; these read DKQDCPGPGPEKEQAPVQVS and IPTRTKMPESSQRDSADSRLSKRSLSADE. Positions 1467-1476 are enriched in basic and acidic residues; that stretch reads SQRDSADSRL. 2 positions are modified to phosphoserine: serine 1482 and serine 1514.

As to quaternary structure, interacts with SETDB1.

It is found in the nucleus. Its function is as follows. Plays a role in the regulation of imprinted gene expression, regulates repressive epigenetic modifications associated with SETDB1. Required for the recruitment or accumulation of SETDB1 to the endogenous retroviruses (ERVs) and maintenance of repressive chromatin configuration, contributing to a subset of the SETDB1-dependent ERV silencing in embryonic stem cells. This Mus musculus (Mouse) protein is Retroelement silencing factor 1.